A 286-amino-acid chain; its full sequence is L-cysteine S-thiosulfotransferase subunit SoxA (286 aa).

The N-terminal stretch at 1 to 27 (MKKTIQRGLFTGALVLMTAMTAKPANA) is a signal peptide. A disulfide bridge connects residues C106 and C137. A Cytochrome c domain is found at 180–286 (DAYMKGKKFF…LKYNGPASRK (107 aa)). The heme site is built by C200 and H204. R243 contributes to the substrate binding site. C247 serves as a coordination point for heme. C247 (cysteine persulfide intermediate) is an active-site residue.

Belongs to the SoxA family. Heterodimer of SoxA and SoxX. The SoxAX complex interacts with CT1020, SoxAX-binding protein SaxB (SoxK); this interaction seems to be between SoxA and CT1020 and stimulates catalytic activity of the SoxAX complex. The cofactor is heme. Post-translationally, cysteine persulfide at Cys-247.

The protein resides in the periplasm. The catalysed reaction is L-cysteinyl-[SoxY protein] + thiosulfate + 2 Fe(III)-[cytochrome c] = S-sulfosulfanyl-L-cysteinyl-[SoxY protein] + 2 Fe(II)-[cytochrome c] + 2 H(+). It catalyses the reaction S-sulfanyl-L-cysteinyl-[SoxY protein] + thiosulfate + 2 Fe(III)-[cytochrome c] = S-(2-sulfodisulfanyl)-L-cysteinyl-[SoxY protein] + 2 Fe(II)-[cytochrome c] + 2 H(+). Its function is as follows. C-type monoheme cytochrome, which is part of the SoxAX cytochrome complex involved in sulfur oxidation. The SoxAX complex catalyzes the formation of a heterodisulfide bond between the conserved cysteine residue on a sulfur carrier SoxYZ complex subunit SoxY and thiosulfate or other inorganic sulfur substrates. This leads to the liberation of two electrons, which may be transferred from the SoxAX complex to another cytochrome c and which then may be used for reductive CO(2) fixation. The chain is L-cysteine S-thiosulfotransferase subunit SoxA from Chlorobaculum tepidum (strain ATCC 49652 / DSM 12025 / NBRC 103806 / TLS) (Chlorobium tepidum).